We begin with the raw amino-acid sequence, 464 residues long: Gasdermin-A3 (464 aa).

Positions 1–261 (MPVFEDVTRA…EEPEEEKLIG (261 aa)) are triggers pyroptosis. 9-13 (RALVR) contributes to the a cardiolipin binding site. 4 beta stranded membrane passes run 78-95 (NFSFKNMLDVQVQGLVEV), 99-120 (VKVKGTAGLSQSSTLEVQTLSV), 164-180 (VTVEQTGNANAIFSLPS), and 184-198 (LGLQGSLNNNKAVTI). A coiled-coil region spans residues 255–327 (EEEKLIGEMH…DKGQKVTLEA (73 aa)).

It belongs to the gasdermin family. Homooligomer; homooligomeric ring-shaped pore complex containing 18-36 subunits when inserted in the membrane. Cleavage relieves autoinhibition by releasing the N-terminal moiety (Gasdermin-A3, N-terminal) that initiates pyroptosis. In contrast to Gsdma, not cleaved by bacterial effector protein SpeB. In terms of processing, palmitoylated. In terms of tissue distribution, highest levels in skin with weak expression in placenta and testis. Not detected in the gastrointestinal tract. In skin, expressed in postnatal hair follicles and epidermis as well as sebaceous gland basal cells.

It localises to the cytoplasm. Its subcellular location is the cytosol. It is found in the cell membrane. The protein localises to the mitochondrion membrane. With respect to regulation, the full-length protein before cleavage is inactive: intramolecular interactions between N- and C-terminal domains mediate autoinhibition in the absence of activation signal. The intrinsic pyroptosis-inducing activity is carried by the released N-terminal moiety (Gasdermin-A3, N-terminal). Its function is as follows. Precursor of a pore-forming protein involved in the transition from catagen to telogen at the end of hair follicle morphogenesis. This form constitutes the precursor of the pore: upon cleavage, the released N-terminal moiety (Gasdermin-A3, N-terminal) binds to membranes and forms pores, triggering pyroptosis. This form acts as a sensor of infection: activation is triggered by cleavage by some bacterial effector protein, which releases the N-terminal moiety (Gasdermin-A3, N-terminal). In terms of biological role, pore-forming protein that causes membrane permeabilization and pyroptosis. Released upon cleavage by some bacterial effector protein, and binds to membrane inner leaflet lipids. Homooligomerizes within the membrane and forms pores of 10-15 nanometers (nm) of inner diameter, allowing the release of mature interleukin-1 (IL1B and IL18) and triggering pyroptosis. Binds to membrane inner leaflet lipids, including bisphosphorylated phosphatidylinositols, such as phosphatidylinositol (4,5)-bisphosphate, as well as phosphatidylinositol (3,4,5)-bisphosphate, and more weakly to monophosphorylated phosphatidylinositols. Also binds to bacterial and mitochondrial lipids, including cardiolipin, and exhibits bactericidal activity. Plays a role in the transition from catagen to telogen at the end of hair follicle morphogenesis, possibly by regulating hair follicle stem cell niche maintenance. Also required for mammary gland development. This Mus musculus (Mouse) protein is Gasdermin-A3.